A 282-amino-acid polypeptide reads, in one-letter code: Pantothenate synthetase (282 aa).

30–37 (MGYLHAGH) contributes to the ATP binding site. The active-site Proton donor is the H37. Q61 contributes to the (R)-pantoate binding site. Q61 lines the beta-alanine pocket. 147 to 150 (GKKD) provides a ligand contact to ATP. Q153 lines the (R)-pantoate pocket. Residues V176 and 184–187 (MSSR) contribute to the ATP site.

It belongs to the pantothenate synthetase family. Homodimer.

It localises to the cytoplasm. It carries out the reaction (R)-pantoate + beta-alanine + ATP = (R)-pantothenate + AMP + diphosphate + H(+). It participates in cofactor biosynthesis; (R)-pantothenate biosynthesis; (R)-pantothenate from (R)-pantoate and beta-alanine: step 1/1. Catalyzes the condensation of pantoate with beta-alanine in an ATP-dependent reaction via a pantoyl-adenylate intermediate. This is Pantothenate synthetase from Geotalea uraniireducens (strain Rf4) (Geobacter uraniireducens).